We begin with the raw amino-acid sequence, 187 residues long: MLDAATYTPRLKAAYAETIRAAMKEEFGYKNDMMIPRLDKIVLNIGAGAEAVKDSKKAKSAQDDLSAIAGQRAVITKAKKSIAGFRVREDMPLGAKVTLRGDRMYEFLDRLITIAMPRIRDFRGVKGSAFDGRGNYALGLKEHIVFPEINFDKVDEVWGMDIIICTTAASDAEAKALLKHFNMPFNS.

Belongs to the universal ribosomal protein uL5 family. As to quaternary structure, part of the 50S ribosomal subunit; part of the 5S rRNA/L5/L18/L25 subcomplex. Contacts the 5S rRNA and the P site tRNA. Forms a bridge to the 30S subunit in the 70S ribosome.

Functionally, this is one of the proteins that bind and probably mediate the attachment of the 5S RNA into the large ribosomal subunit, where it forms part of the central protuberance. In the 70S ribosome it contacts protein S13 of the 30S subunit (bridge B1b), connecting the 2 subunits; this bridge is implicated in subunit movement. Contacts the P site tRNA; the 5S rRNA and some of its associated proteins might help stabilize positioning of ribosome-bound tRNAs. The protein is Large ribosomal subunit protein uL5 of Dinoroseobacter shibae (strain DSM 16493 / NCIMB 14021 / DFL 12).